We begin with the raw amino-acid sequence, 856 residues long: Serine/threonine-protein phosphatase 6 regulatory subunit 1 (856 aa).

Residues 10 to 403 (SSHLDTLLEK…VFNNFLHAQV (394 aa)) form an interaction with PPP6C region. Ser232 is subject to Phosphoserine. The residue at position 524 (Thr524) is a Phosphothreonine. Phosphoserine is present on residues Ser529, Ser530, and Ser531. The segment covering 621–630 (DDEEEEEEEG) has biased composition (acidic residues). Disordered regions lie at residues 621–770 (DDEE…KVAE) and 792–856 (RSAP…SGSQ). 2 positions are modified to phosphoserine: Ser633 and Ser636. Over residues 644–656 (QGSQPVRASQASQ) the composition is skewed to polar residues. Residues 667 to 683 (DSEEEDEEEDEEEDEGA) are compositionally biased toward acidic residues. Phosphoserine is present on residues Ser698 and Ser739. Residues 794 to 809 (APSSLDSATRDPSTSV) show a composition bias toward polar residues. Position 826 is a phosphoserine (Ser826). Over residues 842–856 (PNGSTPGGPISSGSQ) the composition is skewed to low complexity.

The protein belongs to the SAPS family. In terms of assembly, protein phosphatase 6 (PP6) holoenzyme is proposed to be a heterotrimeric complex formed of the catalytic subunit, a SAPS domain-containing subunit (PP6R) and an ankyrin repeat-domain containing regulatory subunit (ARS). Interacts with PPP6C and NFKBIE. Interacts with ANKRD28, ANKRD44 and ANKRD52. In terms of tissue distribution, ubiquitous with highest expression in lung, spleen and bladder.

Its subcellular location is the cytoplasm. Regulatory subunit of protein phosphatase 6 (PP6). May function as a scaffolding PP6 subunit. Involved in the PP6-mediated dephosphorylation of NFKBIE opposing its degradation in response to TNF-alpha. This Mus musculus (Mouse) protein is Serine/threonine-protein phosphatase 6 regulatory subunit 1 (Ppp6r1).